Consider the following 475-residue polypeptide: Glycogen synthase (475 aa).

Residue Lys15 coordinates ADP-alpha-D-glucose.

It belongs to the glycosyltransferase 1 family. Bacterial/plant glycogen synthase subfamily.

The enzyme catalyses [(1-&gt;4)-alpha-D-glucosyl](n) + ADP-alpha-D-glucose = [(1-&gt;4)-alpha-D-glucosyl](n+1) + ADP + H(+). The protein operates within glycan biosynthesis; glycogen biosynthesis. Functionally, synthesizes alpha-1,4-glucan chains using ADP-glucose. The polypeptide is Glycogen synthase (Clostridium kluyveri (strain ATCC 8527 / DSM 555 / NBRC 12016 / NCIMB 10680 / K1)).